Here is an 87-residue protein sequence, read N- to C-terminus: HssA/B-like protein 54 (87 aa).

Belongs to the hssA/B family.

The sequence is that of HssA/B-like protein 54 (hssl54) from Dictyostelium discoideum (Social amoeba).